Here is an 857-residue protein sequence, read N- to C-terminus: Mitogen-activated protein kinase kinase kinase dlk-1 (857 aa).

Residues 62-304 (ISNLEWLGSG…FSHIRQHWEI (243 aa)) enclose the Protein kinase domain. ATP contacts are provided by residues 68–76 (LGSGSQGAV) and lysine 89. Residue aspartate 173 is the Proton acceptor of the active site. 4 disordered regions span residues 441 to 503 (EEMS…ISRN), 572 to 625 (RIAS…PSRN), 733 to 775 (NAND…MESE), and 818 to 857 (HSIK…AVRI). Over residues 467–488 (SSGAQSSPFSRQSSCRSSAGQQ) the composition is skewed to low complexity. The span at 609-623 (APRSSSKLNRSSYPS) shows a compositional bias: polar residues. A compositionally biased stretch (acidic residues) spans 753–762 (ADVESSEDEG). A compositionally biased stretch (polar residues) spans 763–772 (NGNNILNTSM).

The protein belongs to the protein kinase superfamily. STE Ser/Thr protein kinase family. MAP kinase kinase kinase subfamily. Mg(2+) is required as a cofactor. Post-translationally, ubiquitinated by rpm-1. Negatively regulated by ubiquitination by fsn-1 bound rpm-1, followed by degradation.

It localises to the synapse. The catalysed reaction is L-seryl-[protein] + ATP = O-phospho-L-seryl-[protein] + ADP + H(+). The enzyme catalyses L-threonyl-[protein] + ATP = O-phospho-L-threonyl-[protein] + ADP + H(+). Component of a MAP kinase pathway that functions presynaptically to regulate synaptic architecture and presynaptic differentiation. Phosphorylates and activates mkk-4. The polypeptide is Mitogen-activated protein kinase kinase kinase dlk-1 (Caenorhabditis briggsae).